Consider the following 121-residue polypeptide: Ribosome-binding factor A (121 aa).

This sequence belongs to the RbfA family. Monomer. Binds 30S ribosomal subunits, but not 50S ribosomal subunits or 70S ribosomes.

It localises to the cytoplasm. In terms of biological role, one of several proteins that assist in the late maturation steps of the functional core of the 30S ribosomal subunit. Associates with free 30S ribosomal subunits (but not with 30S subunits that are part of 70S ribosomes or polysomes). Required for efficient processing of 16S rRNA. May interact with the 5'-terminal helix region of 16S rRNA. This chain is Ribosome-binding factor A, found in Clostridium tetani (strain Massachusetts / E88).